Consider the following 362-residue polypeptide: Phosphoserine aminotransferase (362 aa).

2 residues coordinate L-glutamate: Ser9 and Arg42. Pyridoxal 5'-phosphate-binding positions include 76-77 (AR), Trp102, Thr153, Asp174, and Gln197. Lys198 is modified (N6-(pyridoxal phosphate)lysine). 239–240 (NT) lines the pyridoxal 5'-phosphate pocket.

This sequence belongs to the class-V pyridoxal-phosphate-dependent aminotransferase family. SerC subfamily. In terms of assembly, homodimer. Pyridoxal 5'-phosphate is required as a cofactor.

It localises to the cytoplasm. The enzyme catalyses O-phospho-L-serine + 2-oxoglutarate = 3-phosphooxypyruvate + L-glutamate. It carries out the reaction 4-(phosphooxy)-L-threonine + 2-oxoglutarate = (R)-3-hydroxy-2-oxo-4-phosphooxybutanoate + L-glutamate. Its pathway is amino-acid biosynthesis; L-serine biosynthesis; L-serine from 3-phospho-D-glycerate: step 2/3. It functions in the pathway cofactor biosynthesis; pyridoxine 5'-phosphate biosynthesis; pyridoxine 5'-phosphate from D-erythrose 4-phosphate: step 3/5. Functionally, catalyzes the reversible conversion of 3-phosphohydroxypyruvate to phosphoserine and of 3-hydroxy-2-oxo-4-phosphonooxybutanoate to phosphohydroxythreonine. This chain is Phosphoserine aminotransferase, found in Photorhabdus laumondii subsp. laumondii (strain DSM 15139 / CIP 105565 / TT01) (Photorhabdus luminescens subsp. laumondii).